A 330-amino-acid chain; its full sequence is Methionine import ATP-binding protein MetN (330 aa).

The 240-residue stretch at 2 to 241 folds into the ABC transporter domain; sequence IAFRGVSKVY…PSTRLHQLCF (240 aa). Residue 38 to 45 coordinates ATP; the sequence is GQSGAGKS.

The protein belongs to the ABC transporter superfamily. Methionine importer (TC 3.A.1.24) family. The complex is composed of two ATP-binding proteins (MetN), two transmembrane proteins (MetI) and a solute-binding protein (MetQ).

It localises to the cell inner membrane. It carries out the reaction L-methionine(out) + ATP + H2O = L-methionine(in) + ADP + phosphate + H(+). It catalyses the reaction D-methionine(out) + ATP + H2O = D-methionine(in) + ADP + phosphate + H(+). Functionally, part of the ABC transporter complex MetNIQ involved in methionine import. Responsible for energy coupling to the transport system. In Myxococcus xanthus (strain DK1622), this protein is Methionine import ATP-binding protein MetN.